A 215-amino-acid chain; its full sequence is Penicillin-binding protein activator LpoB (215 aa).

The first 19 residues, 1–19 (MMKMCRYALITALAIFLAG), serve as a signal peptide directing secretion. Cysteine 20 carries the N-palmitoyl cysteine lipid modification. Residue cysteine 20 is the site of S-diacylglycerol cysteine attachment. The tract at residues 28 to 78 (APVEEAKPQPQQPAQPQPTVPTVPAVPSVPAQPGPIEHQDQQSGQPAPRVR) is disordered. Residues 37–48 (PQQPAQPQPTVP) are compositionally biased toward pro residues. Residues 49–58 (TVPAVPSVPA) show a composition bias toward low complexity.

It belongs to the LpoB family. In terms of assembly, interacts with PBP1b.

The protein localises to the cell outer membrane. Regulator of peptidoglycan synthesis that is essential for the function of penicillin-binding protein 1B (PBP1b). The polypeptide is Penicillin-binding protein activator LpoB (Klebsiella pneumoniae subsp. pneumoniae (strain ATCC 700721 / MGH 78578)).